The sequence spans 290 residues: MVIQKEKKSCGQVVEEWKEFVWNPRTHQFMGRTGTSWAFILLFYLVFYGFLTAMFTLTMWVMLQTVSEHTPKYQDRLATPGLMIRPKTENLDVIVNVSDTESWDQHVQKLNKFLEPYNDSIQAQKNDVCRPGRYYEQPDNGVLNYPKRACQFNRTQLGNCSGIGDPTHYGYSTGQPCVFIKMNRVINFYAGANQSMNVTCAGKRDEDAENLGNFVMFPANGNIDLMYFPYYGKKFHVNYTQPLVAVKFLNVTPNVEVNVECRINAANIATDDERDKFAGRVAFKLRINKT.

At 1-39 the chain is on the cytoplasmic side; the sequence is MVIQKEKKSCGQVVEEWKEFVWNPRTHQFMGRTGTSWAF. Residues 40–67 traverse the membrane as a helical; Signal-anchor for type II membrane protein segment; sequence ILLFYLVFYGFLTAMFTLTMWVMLQTVS. Residues 68–290 are Extracellular-facing; the sequence is EHTPKYQDRL…VAFKLRINKT (223 aa). Residues Asn-96 and Asn-118 are each glycosylated (N-linked (GlcNAc...) asparagine). Cysteines 129 and 150 form a disulfide. Asn-153 and Asn-159 each carry an N-linked (GlcNAc...) asparagine glycan. Cys-160 and Cys-177 are joined by a disulfide. Asn-193, Asn-197, and Asn-238 each carry an N-linked (GlcNAc...) asparagine glycan. Positions 193–290 are immunoglobulin-like; sequence NQSMNVTCAG…VAFKLRINKT (98 aa). A disulfide bridge links Cys-200 with Cys-261.

Belongs to the X(+)/potassium ATPases subunit beta family. In terms of assembly, the sodium/potassium-transporting ATPase is composed of a catalytic alpha subunit, an auxiliary non-catalytic beta subunit and an additional regulatory subunit. Interacts with BSG.

It localises to the cell membrane. Functionally, this is the non-catalytic component of the active enzyme, which catalyzes the hydrolysis of ATP coupled with the exchange of Na(+) and K(+) ions across the plasma membrane. The exact function of the beta-2 subunit is not known. Mediates cell adhesion of neurons and astrocytes, and promotes neurite outgrowth. This chain is Sodium/potassium-transporting ATPase subunit beta-2 (ATP1B2), found in Oryctolagus cuniculus (Rabbit).